A 497-amino-acid polypeptide reads, in one-letter code: Glutamate--tRNA ligase (497 aa).

The 'HIGH' region signature appears at 12–22 (PSPTGHLHIGN). The short motif at 259-263 (KLSKR) is the 'KMSKS' region element. Position 262 (K262) interacts with ATP.

The protein belongs to the class-I aminoacyl-tRNA synthetase family. Glutamate--tRNA ligase type 1 subfamily. As to quaternary structure, monomer.

It localises to the cytoplasm. The catalysed reaction is tRNA(Glu) + L-glutamate + ATP = L-glutamyl-tRNA(Glu) + AMP + diphosphate. Its function is as follows. Catalyzes the attachment of glutamate to tRNA(Glu) in a two-step reaction: glutamate is first activated by ATP to form Glu-AMP and then transferred to the acceptor end of tRNA(Glu). The polypeptide is Glutamate--tRNA ligase (Lacticaseibacillus casei (strain BL23) (Lactobacillus casei)).